We begin with the raw amino-acid sequence, 265 residues long: Glutamate racemase (265 aa).

Substrate is bound by residues 12-13 (DS) and 44-45 (YG). The Proton donor/acceptor role is filled by C75. 76 to 77 (NT) provides a ligand contact to substrate. Residue C186 is the Proton donor/acceptor of the active site. Position 187–188 (187–188 (TH)) interacts with substrate.

It belongs to the aspartate/glutamate racemases family.

The enzyme catalyses L-glutamate = D-glutamate. The protein operates within cell wall biogenesis; peptidoglycan biosynthesis. Its function is as follows. Provides the (R)-glutamate required for cell wall biosynthesis. The sequence is that of Glutamate racemase from Pseudomonas aeruginosa (strain ATCC 15692 / DSM 22644 / CIP 104116 / JCM 14847 / LMG 12228 / 1C / PRS 101 / PAO1).